The following is a 510-amino-acid chain: Maturase K (510 aa).

This sequence belongs to the intron maturase 2 family. MatK subfamily.

Its subcellular location is the plastid. It localises to the chloroplast. Usually encoded in the trnK tRNA gene intron. Probably assists in splicing its own and other chloroplast group II introns. This is Maturase K from Populus trichocarpa (Western balsam poplar).